Consider the following 238-residue polypeptide: UPF0280 protein Mboo_1274 (238 aa).

It belongs to the UPF0280 family.

The chain is UPF0280 protein Mboo_1274 from Methanoregula boonei (strain DSM 21154 / JCM 14090 / 6A8).